Consider the following 353-residue polypeptide: Protein RecA (353 aa).

67–74 (GPESSGKT) contributes to the ATP binding site.

This sequence belongs to the RecA family.

The protein localises to the cytoplasm. Functionally, can catalyze the hydrolysis of ATP in the presence of single-stranded DNA, the ATP-dependent uptake of single-stranded DNA by duplex DNA, and the ATP-dependent hybridization of homologous single-stranded DNAs. It interacts with LexA causing its activation and leading to its autocatalytic cleavage. In Salmonella paratyphi A (strain ATCC 9150 / SARB42), this protein is Protein RecA.